The sequence spans 199 residues: Potassium-transporting ATPase KdpC subunit (199 aa).

Residues 7–27 traverse the membrane as a helical segment; sequence PAIVLLLALTLLTGLAYPLAM. The segment at 67-86 is disordered; the sequence is HGRPSATTAADPQDSSKTVP. The segment covering 71–84 has biased composition (polar residues); it reads SATTAADPQDSSKT.

This sequence belongs to the KdpC family. The system is composed of three essential subunits: KdpA, KdpB and KdpC.

It localises to the cell inner membrane. In terms of biological role, part of the high-affinity ATP-driven potassium transport (or Kdp) system, which catalyzes the hydrolysis of ATP coupled with the electrogenic transport of potassium into the cytoplasm. This subunit acts as a catalytic chaperone that increases the ATP-binding affinity of the ATP-hydrolyzing subunit KdpB by the formation of a transient KdpB/KdpC/ATP ternary complex. In Rhodopseudomonas palustris (strain BisB18), this protein is Potassium-transporting ATPase KdpC subunit.